Reading from the N-terminus, the 282-residue chain is Energy-coupling factor transporter ATP-binding protein EcfA1 (282 aa).

The region spanning 6–243 is the ABC transporter domain; the sequence is VTVKHLSFTY…EVLIKSAGLE (238 aa). 40 to 47 provides a ligand contact to ATP; it reads GHNGSGKS.

This sequence belongs to the ABC transporter superfamily. Energy-coupling factor EcfA family. Forms a stable energy-coupling factor (ECF) transporter complex composed of 2 membrane-embedded substrate-binding proteins (S component), 2 ATP-binding proteins (A component) and 2 transmembrane proteins (T component).

Its subcellular location is the cell membrane. Functionally, ATP-binding (A) component of a common energy-coupling factor (ECF) ABC-transporter complex. Unlike classic ABC transporters this ECF transporter provides the energy necessary to transport a number of different substrates. The chain is Energy-coupling factor transporter ATP-binding protein EcfA1 from Lactobacillus johnsonii (strain CNCM I-12250 / La1 / NCC 533).